A 658-amino-acid polypeptide reads, in one-letter code: Glycogen debranching enzyme (658 aa).

Asp335 serves as the catalytic Nucleophile. Glu370 acts as the Proton donor in catalysis. The span at 457 to 468 (NDANGEGNRDGT) shows a compositional bias: basic and acidic residues. The disordered stretch occupies residues 457–478 (NDANGEGNRDGTDSNFSNNHGT).

The protein belongs to the glycosyl hydrolase 13 family.

It catalyses the reaction Hydrolysis of (1-&gt;6)-alpha-D-glucosidic linkages to branches with degrees of polymerization of three or four glucose residues in limit dextrin.. Its pathway is glycan degradation; glycogen degradation. Functionally, removes maltotriose and maltotetraose chains that are attached by 1,6-alpha-linkage to the limit dextrin main chain, generating a debranched limit dextrin. This Pectobacterium carotovorum subsp. carotovorum (strain PC1) protein is Glycogen debranching enzyme.